The primary structure comprises 351 residues: Tetraacyldisaccharide 4'-kinase (351 aa).

An ATP-binding site is contributed by 47-54 (KAGGTGKT).

It belongs to the LpxK family.

The catalysed reaction is a lipid A disaccharide + ATP = a lipid IVA + ADP + H(+). It participates in glycolipid biosynthesis; lipid IV(A) biosynthesis; lipid IV(A) from (3R)-3-hydroxytetradecanoyl-[acyl-carrier-protein] and UDP-N-acetyl-alpha-D-glucosamine: step 6/6. Its function is as follows. Transfers the gamma-phosphate of ATP to the 4'-position of a tetraacyldisaccharide 1-phosphate intermediate (termed DS-1-P) to form tetraacyldisaccharide 1,4'-bis-phosphate (lipid IVA). The protein is Tetraacyldisaccharide 4'-kinase of Cytophaga hutchinsonii (strain ATCC 33406 / DSM 1761 / CIP 103989 / NBRC 15051 / NCIMB 9469 / D465).